The sequence spans 294 residues: Acetyl-coenzyme A carboxylase carboxyl transferase subunit beta (294 aa).

In terms of domain architecture, CoA carboxyltransferase N-terminal spans Ile-30 to Glu-294. Cys-34, Cys-37, Cys-53, and Cys-56 together coordinate Zn(2+). The segment at Cys-34–Cys-56 adopts a C4-type zinc-finger fold.

Belongs to the AccD/PCCB family. Acetyl-CoA carboxylase is a heterohexamer composed of biotin carboxyl carrier protein (AccB), biotin carboxylase (AccC) and two subunits each of ACCase subunit alpha (AccA) and ACCase subunit beta (AccD). It depends on Zn(2+) as a cofactor.

The protein localises to the cytoplasm. It catalyses the reaction N(6)-carboxybiotinyl-L-lysyl-[protein] + acetyl-CoA = N(6)-biotinyl-L-lysyl-[protein] + malonyl-CoA. Its pathway is lipid metabolism; malonyl-CoA biosynthesis; malonyl-CoA from acetyl-CoA: step 1/1. Component of the acetyl coenzyme A carboxylase (ACC) complex. Biotin carboxylase (BC) catalyzes the carboxylation of biotin on its carrier protein (BCCP) and then the CO(2) group is transferred by the transcarboxylase to acetyl-CoA to form malonyl-CoA. This chain is Acetyl-coenzyme A carboxylase carboxyl transferase subunit beta, found in Listeria welshimeri serovar 6b (strain ATCC 35897 / DSM 20650 / CCUG 15529 / CIP 8149 / NCTC 11857 / SLCC 5334 / V8).